We begin with the raw amino-acid sequence, 185 residues long: Tetratricopeptide repeat protein 36 homolog (185 aa).

TPR repeat units follow at residues 53-86, 88-119, and 125-158; these read SRELELKAIALSESGELDGALELFQQSLNLAQRA, VLNNRAQTLRLAKRDEEALDDLNKALELANDQ, and CHAHCQRGVLYRKLDNLEAARADFEAAAQLGSKF.

This sequence belongs to the TTC36 family.

The sequence is that of Tetratricopeptide repeat protein 36 homolog from Drosophila melanogaster (Fruit fly).